We begin with the raw amino-acid sequence, 1058 residues long: Ubiquitin-like modifier-activating enzyme 1 Y (1058 aa).

A disordered region spans residues 1–22; it reads MSSSVLSKKRKVSGPDSSLDSS. Residues A477, D503, R514, K527, and 575-576 contribute to the ATP site; that span reads DN. Catalysis depends on C631, which acts as the Glycyl thioester intermediate.

It belongs to the ubiquitin-activating E1 family. In terms of assembly, monomer. As to expression, expressed in testis in A spermatogonia and spermatids but not (or at very low levels) in pachytene spermatocytes. Also expressed in Y-bearing ovaries and at very low levels in adrenal gland.

The enzyme catalyses ATP + ubiquitin + [E1 ubiquitin-activating enzyme]-L-cysteine = AMP + diphosphate + S-ubiquitinyl-[E1 ubiquitin-activating enzyme]-L-cysteine.. The protein operates within protein modification; protein ubiquitination. Activates ubiquitin by first adenylating its C-terminal glycine residue with ATP, and thereafter linking this residue to the side chain of a cysteine residue in E1, yielding a ubiquitin-E1 thioester and free AMP. The Y chromosome form could be involved in the survival and proliferation of differentiating spermatogonia. The sequence is that of Ubiquitin-like modifier-activating enzyme 1 Y (Uba1y) from Mus musculus (Mouse).